A 210-amino-acid chain; its full sequence is Scoloptoxin SSD558 (210 aa).

The N-terminal stretch at 1-23 is a signal peptide; the sequence is MNILLPSTLFVLLMFQIIGSGMG.

Contains 3 disulfide bonds. As to expression, expressed by the venom gland.

It localises to the secreted. The sequence is that of Scoloptoxin SSD558 from Scolopendra dehaani (Thai centipede).